The chain runs to 207 residues: Ciliary microtubule-associated protein 3 (207 aa).

Interacts with proteins involved in ciliary transport, including ARL13B, CETN1, KIF3A, RAB6A, RAB8A, TUBB1 and TUBG1. Interacts with AURKA. As to expression, expressed in tissues rich in ciliated cells, such as lung, kidney, vas deferens and testis. Both isoforms 1 and 2 are expressed in testis.

The protein resides in the golgi apparatus. Its subcellular location is the golgi stack. It localises to the trans-Golgi network. It is found in the nucleus. The protein localises to the cytoplasm. The protein resides in the cytoplasmic vesicle. During primary cilia disassembly, involved in cilia disassembly. Required specifically to control cilia retraction as well as the liberation and duplication of the basal body/centrosome. May act by stimulating AURKA activity at the basal body in a cell cycle-dependent manner. This Mus musculus (Mouse) protein is Ciliary microtubule-associated protein 3 (Cimap3).